An 88-amino-acid chain; its full sequence is Cell division topological specificity factor (88 aa).

This sequence belongs to the MinE family.

Its function is as follows. Prevents the cell division inhibition by proteins MinC and MinD at internal division sites while permitting inhibition at polar sites. This ensures cell division at the proper site by restricting the formation of a division septum at the midpoint of the long axis of the cell. This Methylibium petroleiphilum (strain ATCC BAA-1232 / LMG 22953 / PM1) protein is Cell division topological specificity factor.